A 78-amino-acid chain; its full sequence is Sec-independent protein translocase protein TatA (78 aa).

A helical membrane pass occupies residues 1–21 (MGSLSIWHWIVVIGVVLLLFG). Residues 42 to 60 (GLQDDEKTAEKPEPVKSID) are compositionally biased toward basic and acidic residues. The tract at residues 42–78 (GLQDDEKTAEKPEPVKSIDHTAPPAAAPRTDVGSKVV) is disordered.

This sequence belongs to the TatA/E family. As to quaternary structure, the Tat system comprises two distinct complexes: a TatABC complex, containing multiple copies of TatA, TatB and TatC subunits, and a separate TatA complex, containing only TatA subunits. Substrates initially bind to the TatABC complex, which probably triggers association of the separate TatA complex to form the active translocon.

It localises to the cell inner membrane. Its function is as follows. Part of the twin-arginine translocation (Tat) system that transports large folded proteins containing a characteristic twin-arginine motif in their signal peptide across membranes. TatA could form the protein-conducting channel of the Tat system. This chain is Sec-independent protein translocase protein TatA, found in Rhodopseudomonas palustris (strain BisB18).